The primary structure comprises 513 residues: Cytochrome P450 94A2 (513 aa).

Residues 7 to 24 (ISWLLFSTSLFWFLFLAT) form a helical membrane-spanning segment. Cysteine 455 provides a ligand contact to heme.

It belongs to the cytochrome P450 family. Heme is required as a cofactor. Weakly expressed in seedlings.

The protein resides in the endoplasmic reticulum membrane. In terms of biological role, catalyzes the omega-hydroxylation of various fatty acids (FA). The substrate specificity is higher for myristate &gt; laurate = palmitate (C14&gt;C16=C12). The polypeptide is Cytochrome P450 94A2 (CYP94A2) (Vicia sativa (Spring vetch)).